A 247-amino-acid chain; its full sequence is MAPQMGYDRAITVFSPDGRLFQVEYAREAVKRGTTAVGIKAADGVVLLVDKRITSRLVEAESIEKIFQIDDHIGAATSGLVADARALVDRARVEAQVNRVSYDELIGVEVISKKICDHKQTYTQYGGVRPYGTALLIAGVDDKRPRLFETDPSGALLEYKATAIGAGRNAVVEVFEADYKEDMNIEAAILLGMDALYKAAEGKFDAGTLEVGVVSLQDKKFRKLEPEEVGNYVQQILEKHKETENKE.

It belongs to the peptidase T1A family. As to quaternary structure, the 20S proteasome core is composed of 14 alpha and 14 beta subunits that assemble into four stacked heptameric rings, resulting in a barrel-shaped structure. The two inner rings, each composed of seven catalytic beta subunits, are sandwiched by two outer rings, each composed of seven alpha subunits. The catalytic chamber with the active sites is on the inside of the barrel. Has a gated structure, the ends of the cylinder being occluded by the N-termini of the alpha-subunits. Is capped at one or both ends by the proteasome regulatory ATPase, PAN.

The protein localises to the cytoplasm. Its activity is regulated as follows. The formation of the proteasomal ATPase PAN-20S proteasome complex, via the docking of the C-termini of PAN into the intersubunit pockets in the alpha-rings, triggers opening of the gate for substrate entry. Interconversion between the open-gate and close-gate conformations leads to a dynamic regulation of the 20S proteasome proteolysis activity. Functionally, component of the proteasome core, a large protease complex with broad specificity involved in protein degradation. The sequence is that of Proteasome subunit alpha from Methanosarcina thermophila.